A 350-amino-acid polypeptide reads, in one-letter code: UDP-N-acetylenolpyruvoylglucosamine reductase (350 aa).

The region spanning 24-195 is the FAD-binding PCMH-type domain; sequence HVEATARWLL…VAVEFNLPLL (172 aa). Arg172 is an active-site residue. Ser245 serves as the catalytic Proton donor. Residue Glu342 is part of the active site.

The protein belongs to the MurB family. FAD serves as cofactor.

The protein localises to the cytoplasm. It catalyses the reaction UDP-N-acetyl-alpha-D-muramate + NADP(+) = UDP-N-acetyl-3-O-(1-carboxyvinyl)-alpha-D-glucosamine + NADPH + H(+). It functions in the pathway cell wall biogenesis; peptidoglycan biosynthesis. In terms of biological role, cell wall formation. The chain is UDP-N-acetylenolpyruvoylglucosamine reductase from Xanthomonas oryzae pv. oryzae (strain MAFF 311018).